A 340-amino-acid chain; its full sequence is Peroxisomal adenine nucleotide transporter 1 (340 aa).

3 Solcar repeats span residues 4–119 (ENAV…VRKH), 133–218 (FSTP…LREA), and 236–320 (LSPG…LTKM). Transmembrane regions (helical) follow at residues 6 to 26 (AVIG…LDLA), 96 to 116 (GSST…YTLV), 139 to 159 (LVLG…INVV), 190 to 210 (GFWA…ITYA), 242 to 262 (FVMG…LIIA), and 293 to 313 (WKGL…LFMF).

It belongs to the mitochondrial carrier (TC 2.A.29) family.

Its subcellular location is the peroxisome membrane. Functionally, adenine nucleotide transporter involved in the uniport of ATP and adenine nucleotide hetero-exchange transport between the cytosol and the peroxisomal lumen. This transport is accompanied by a proton transport from the peroxisomal lumen to the cytosol. Transport of ATP into the peroxisome is required for beta-oxidation of medium-chain fatty acids. This is Peroxisomal adenine nucleotide transporter 1 (ANT1) from Eremothecium gossypii (strain ATCC 10895 / CBS 109.51 / FGSC 9923 / NRRL Y-1056) (Yeast).